The sequence spans 380 residues: 3-isopropylmalate dehydratase large subunit (380 aa).

Residues C262, C320, and C323 each contribute to the [4Fe-4S] cluster site.

The protein belongs to the aconitase/IPM isomerase family. LeuC type 2 subfamily. Heterodimer of LeuC and LeuD. [4Fe-4S] cluster serves as cofactor.

It carries out the reaction (2R,3S)-3-isopropylmalate = (2S)-2-isopropylmalate. It participates in amino-acid biosynthesis; L-leucine biosynthesis; L-leucine from 3-methyl-2-oxobutanoate: step 2/4. In terms of biological role, catalyzes the isomerization between 2-isopropylmalate and 3-isopropylmalate, via the formation of 2-isopropylmaleate. The polypeptide is 3-isopropylmalate dehydratase large subunit (Thermococcus kodakarensis (strain ATCC BAA-918 / JCM 12380 / KOD1) (Pyrococcus kodakaraensis (strain KOD1))).